The sequence spans 177 residues: Plasmid transfer protein TraF (177 aa).

Residues 1 to 30 (MSRFQRLTKYVAIGGGAALLLAGAAYLAGA) form the signal peptide.

The protein belongs to the peptidase S26C family.

The protein localises to the periplasm. Its function is as follows. Required for donor-specific phage sensitivity. May be involved in pilus assembly. This Escherichia coli protein is Plasmid transfer protein TraF (traF).